The sequence spans 275 residues: tRNA pseudouridine synthase A (275 aa).

The active-site Nucleophile is D56. A substrate-binding site is contributed by Y110.

The protein belongs to the tRNA pseudouridine synthase TruA family.

The catalysed reaction is uridine(38/39/40) in tRNA = pseudouridine(38/39/40) in tRNA. Functionally, formation of pseudouridine at positions 38, 39 and 40 in the anticodon stem and loop of transfer RNAs. This is tRNA pseudouridine synthase A from Haloarcula marismortui (strain ATCC 43049 / DSM 3752 / JCM 8966 / VKM B-1809) (Halobacterium marismortui).